The sequence spans 320 residues: ATP-dependent 6-phosphofructokinase (320 aa).

Gly12 lines the ATP pocket. ADP is bound by residues 22–26 (RGVVR) and 55–60 (RYSVSD). ATP is bound by residues 73–74 (RF) and 103–106 (GDGS). Asp104 is a binding site for Mg(2+). 126–128 (TID) serves as a coordination point for substrate. Asp128 functions as the Proton acceptor in the catalytic mechanism. Residue Arg155 participates in ADP binding. Substrate is bound by residues Arg163 and 170-172 (MGR). ADP contacts are provided by residues 186–188 (GCE), Lys212, and 214–216 (KKH). Residues Glu223, Arg244, and 250–253 (HIQR) each bind substrate.

This sequence belongs to the phosphofructokinase type A (PFKA) family. ATP-dependent PFK group I subfamily. Prokaryotic clade 'B1' sub-subfamily. As to quaternary structure, homotetramer. It depends on Mg(2+) as a cofactor.

It localises to the cytoplasm. It catalyses the reaction beta-D-fructose 6-phosphate + ATP = beta-D-fructose 1,6-bisphosphate + ADP + H(+). It functions in the pathway carbohydrate degradation; glycolysis; D-glyceraldehyde 3-phosphate and glycerone phosphate from D-glucose: step 3/4. Allosterically activated by ADP and other diphosphonucleosides, and allosterically inhibited by phosphoenolpyruvate. In terms of biological role, catalyzes the phosphorylation of D-fructose 6-phosphate to fructose 1,6-bisphosphate by ATP, the first committing step of glycolysis. The protein is ATP-dependent 6-phosphofructokinase of Buchnera aphidicola subsp. Schizaphis graminum (strain Sg).